Here is a 975-residue protein sequence, read N- to C-terminus: Chromosome transmission fidelity protein 18 homolog (975 aa).

2 disordered regions span residues 30-83 (EGAS…KRQV) and 114-141 (SEEM…DLAE). Thr51 carries the post-translational modification Phosphothreonine. The segment covering 58 to 77 (RGDAASSPAPAASVGSSQGG) has biased composition (low complexity). Ser64 carries the post-translational modification Phosphoserine. A compositionally biased stretch (pro residues) spans 122–136 (PPDSSPTDITPPPSP). Ser225 carries the post-translational modification Phosphoserine. Disordered stretches follow at residues 246 to 276 (SDTL…GQDA) and 320 to 346 (RPSR…KWKS). 374–381 (GPPGLGKT) lines the ATP pocket. A disordered region spans residues 858–896 (ASARVENSPQVDGSPPGLEGLLGGIGEKGVHRPAPRNHE). Phosphoserine is present on Ser871.

Belongs to the activator 1 small subunits family. CTF18 subfamily. Component of the CTF18-RFC complex, which consists of CTF18, CTF8, DCC1, RFC2, RFC3, RFC4 and RFC5. During assembly of the CTF18-RFC complex, CTF18 may first assemble into a subcomplex with RFC2, RFC3, RFC4 and RFC5. CTF18 then interacts directly with CTF8, which in turn interacts with DCC1. The CTF18-RFC complex associates with PCNA and with DNA polymerase POLH. The CTF18-RFC complex does not interact with the Rad9/Rad1/Hus1 complex. CTF18 interacts with SMC1A and RAD21. Interacts with DDX11.

The protein resides in the nucleus. Functionally, chromosome cohesion factor involved in sister chromatid cohesion and fidelity of chromosome transmission. Component of one of the cell nuclear antigen loader complexes, CTF18-replication factor C (CTF18-RFC), which consists of CTF18, CTF8, DCC1, RFC2, RFC3, RFC4 and RFC5. The CTF18-RFC complex binds to single-stranded and primed DNAs and has weak ATPase activity that is stimulated by the presence of primed DNA, replication protein A (RPA) and by proliferating cell nuclear antigen (PCNA). The CTF18-RFC complex catalyzes the ATP-dependent loading of PCNA onto primed and gapped DNA. Interacts with and stimulates DNA polymerase POLH. During DNA repair synthesis, involved in loading DNA polymerase POLE at the sites of local damage. The chain is Chromosome transmission fidelity protein 18 homolog (CHTF18) from Homo sapiens (Human).